Consider the following 331-residue polypeptide: Protein Brevis radix-like 1 (331 aa).

A disordered region spans residues Met1–Phe111. Composition is skewed to polar residues over residues Ser25–Ile41 and Phe48–Leu66. The BRX 1 domain maps to Lys137 to Asn192. Disordered regions lie at residues Leu201–His246 and Thr258–Val279. Basic and acidic residues predominate over residues Asp221–Asn235. One can recognise a BRX 2 domain in the interval Gly276–Leu331.

This sequence belongs to the BRX family. As to quaternary structure, heterodimer with BRXL1. In terms of tissue distribution, expressed in roots.

It localises to the nucleus. Its function is as follows. May act as a regulator of cell proliferation and elongation in the root. This Arabidopsis thaliana (Mouse-ear cress) protein is Protein Brevis radix-like 1 (BRXL1).